A 360-amino-acid polypeptide reads, in one-letter code: MKNIFLHSLNLENYRNFKNLELKTDNTPIILIGENGSGKTNILEAISLFYPGRGLRSAKLANVCKTSEDHCLVKALLQSKLGLAEFTTQFKRSSNRRITEYNESKIANNELSKFTSMVWLTPHMEGIFTSGSSDRRKFLDRIVYNFDPKHAELVSKYEYYMHERNKILVEDRRDDNWLKIIEEKMADISNHIANNRLKTLEFMQQAIDDLENEFPKADLSIDGIVEQKILNGKKNIVSFITAELYQTRSKDKLLGRTSFGVHKSDFLVKHQKKNILAKFCSTGEQKAILIAIILAEMNYAIKLTKIAPILLLDEVFVHLDDKRRQYLIEFLTGLNMQLWVTTTNLEGIDNFATKAQLIKL.

ATP is bound at residue 33–40 (GENGSGKT).

The protein belongs to the RecF family.

Its subcellular location is the cytoplasm. Its function is as follows. The RecF protein is involved in DNA metabolism; it is required for DNA replication and normal SOS inducibility. RecF binds preferentially to single-stranded, linear DNA. It also seems to bind ATP. In Rickettsia conorii (strain ATCC VR-613 / Malish 7), this protein is DNA replication and repair protein RecF.